Consider the following 513-residue polypeptide: U3 small nucleolar RNA-associated protein 15 (513 aa).

WD repeat units lie at residues K37–S78, R79–L118, T124–L162, G166–I206, N210–E247, and N250–F294. The tract at residues K332–S354 is disordered.

Interacts with snoRNA U3. Interacts with MPP10. Component of the ribosomal small subunit (SSU) processome composed of at least 40 protein subunits and snoRNA U3. In the absence of snoRNA3, forms a complex with other t-UTPs. This complex can associate with pre-18S ribosomal RNAs.

The protein resides in the nucleus. It is found in the nucleolus. In terms of biological role, involved in nucleolar processing of pre-18S ribosomal RNA. Required for optimal pre-ribosomal RNA transcription by RNA polymerase I together with a subset of U3 proteins required for transcription (t-UTPs). The protein is U3 small nucleolar RNA-associated protein 15 (UTP15) of Saccharomyces cerevisiae (strain ATCC 204508 / S288c) (Baker's yeast).